Here is a 143-residue protein sequence, read N- to C-terminus: Large ribosomal subunit protein bL17 (143 aa).

Belongs to the bacterial ribosomal protein bL17 family. As to quaternary structure, part of the 50S ribosomal subunit. Contacts protein L32.

The chain is Large ribosomal subunit protein bL17 from Bartonella quintana (strain Toulouse) (Rochalimaea quintana).